A 71-amino-acid polypeptide reads, in one-letter code: Cytochrome c oxidase subunit 7, mitochondrial (71 aa).

At 1–35 the chain is on the mitochondrial matrix side; sequence MPGLVNAPNHVPEKQRYYQQAFKNHTRLWKIGPRS. The helical transmembrane segment at 36-58 threads the bilayer; that stretch reads GIIMTTFNIAMWGTFGASMYAMS. The Mitochondrial intermembrane segment spans residues 59-71; sequence RKVLGYNTWFSED.

Belongs to the cytochrome c oxidase VIIa family. As to quaternary structure, component of the cytochrome c oxidase (complex IV, CIV), a multisubunit enzyme composed of 11 subunits. The complex is composed of a catalytic core of 3 subunits Cox1, Cox2 and Cox3, encoded in the mitochondrial DNA, and 8 supernumerary subunits Cox4, Cox5a/Cox5, Cox6, Cox7, Cox8, Cox7a/Cox9, Cox6b/Cox12 and Cox6a/Cox13, which are encoded in the nuclear genome. The complex exists as a monomer or a dimer and forms respiratory supercomplexes (SCs) in the inner mitochondrial membrane with NADH-ubiquinone oxidoreductase (complex I, CI) and ubiquinol-cytochrome c oxidoreductase (cytochrome b-c1 complex, complex III, CIII), resulting in various different assemblies (supercomplexes I(1)IV(1), I(1)III(3)IV(2), III(2)IV(1) and III(2)IV(2) as well as larger supercomplexes of compositions like I(1)III(2)IV(5-6)).

Its subcellular location is the mitochondrion inner membrane. The protein operates within energy metabolism; oxidative phosphorylation. Its function is as follows. Component of the cytochrome c oxidase, the last enzyme in the mitochondrial electron transport chain which drives oxidative phosphorylation. The respiratory chain contains 3 multisubunit complexes succinate dehydrogenase (complex II, CII), ubiquinol-cytochrome c oxidoreductase (cytochrome b-c1 complex, complex III, CIII) and cytochrome c oxidase (complex IV, CIV), that cooperate to transfer electrons derived from NADH and succinate to molecular oxygen, creating an electrochemical gradient over the inner membrane that drives transmembrane transport and the ATP synthase. Cytochrome c oxidase is the component of the respiratory chain that catalyzes the reduction of oxygen to water. Electrons originating from reduced cytochrome c in the intermembrane space (IMS) are transferred via the dinuclear copper A center (CU(A)) of Cox2 and heme A of Cox1 to the active site in Cox1, a binuclear center (BNC) formed by heme A3 and copper B (CU(B)). The BNC reduces molecular oxygen to 2 water molecules using 4 electrons from cytochrome c in the IMS and 4 protons from the mitochondrial matrix. In Neurospora crassa (strain ATCC 24698 / 74-OR23-1A / CBS 708.71 / DSM 1257 / FGSC 987), this protein is Cytochrome c oxidase subunit 7, mitochondrial.